The following is a 739-amino-acid chain: Phosphoribosylformylglycinamidine synthase subunit PurL (739 aa).

Histidine 53 is an active-site residue. ATP is bound by residues tyrosine 56 and lysine 95. Position 97 (glutamate 97) interacts with Mg(2+). Residues serine 98–histidine 101 and arginine 120 contribute to the substrate site. Histidine 99 functions as the Proton acceptor in the catalytic mechanism. Aspartate 121 contacts Mg(2+). Glutamine 244 serves as a coordination point for substrate. Residue aspartate 274 participates in Mg(2+) binding. A substrate-binding site is contributed by glutamate 318–glutamine 320. 2 residues coordinate ATP: aspartate 501 and glycine 538. Asparagine 539 provides a ligand contact to Mg(2+). Serine 541 contributes to the substrate binding site.

The protein belongs to the FGAMS family. In terms of assembly, monomer. Part of the FGAM synthase complex composed of 1 PurL, 1 PurQ and 2 PurS subunits.

The protein localises to the cytoplasm. The enzyme catalyses N(2)-formyl-N(1)-(5-phospho-beta-D-ribosyl)glycinamide + L-glutamine + ATP + H2O = 2-formamido-N(1)-(5-O-phospho-beta-D-ribosyl)acetamidine + L-glutamate + ADP + phosphate + H(+). It participates in purine metabolism; IMP biosynthesis via de novo pathway; 5-amino-1-(5-phospho-D-ribosyl)imidazole from N(2)-formyl-N(1)-(5-phospho-D-ribosyl)glycinamide: step 1/2. Functionally, part of the phosphoribosylformylglycinamidine synthase complex involved in the purines biosynthetic pathway. Catalyzes the ATP-dependent conversion of formylglycinamide ribonucleotide (FGAR) and glutamine to yield formylglycinamidine ribonucleotide (FGAM) and glutamate. The FGAM synthase complex is composed of three subunits. PurQ produces an ammonia molecule by converting glutamine to glutamate. PurL transfers the ammonia molecule to FGAR to form FGAM in an ATP-dependent manner. PurS interacts with PurQ and PurL and is thought to assist in the transfer of the ammonia molecule from PurQ to PurL. This chain is Phosphoribosylformylglycinamidine synthase subunit PurL, found in Listeria monocytogenes serotype 4b (strain CLIP80459).